The chain runs to 551 residues: MPTFDQALRKAGEFGRFQRRVFLLLCLTGVTFAFLFVGVVFLGSQPDYYWCRGPRATALAERCAWSPEEEWNLTTPELHVPAERRGQGHCHRYLLEDTNTSSELSCDPLAAFPNRSAPLVPCSGDWRYVETHSTIVSQFDLVCGNAWMLDLTQAILNLGFLAGAFTLGYAADRYGRLIVYLISCFGVGITGVVVAFAPNFSVFVIFRFLQGVFGKGAWMTCFVIVTEIVGSKQRRIVGIVIQMFFTLGIIILPGIAYFTPSWQGIQLAISLPSFLFLLYYWVVPESPRWLITRKQGEKALQILRRVAKCNGKHLSSNYSEITVTDEEVSNPSCLDLVRTPQMRKCTLILMFAWFTSAVVYQGLVMRLGLIGGNLYMDFFISGLVELPGALLILLTIERLGRRLPFAASNIVAGVSCLVTAFLPEGIPWLRTTVATLGRLGITMAFEIVYLVNSELYPTTLRNFGVSLCSGLCDFGGIIAPFLLFRLAAIWLELPLIIFGILASVCGGLVMLLPETKGIALPETVEDVEKLGSSQLHQCGRKKKTQVSTSNV.

A helical transmembrane segment spans residues 21–41 (VFLLLCLTGVTFAFLFVGVVF). Residues Asn72, Asn99, and Asn114 are each glycosylated (N-linked (GlcNAc...) asparagine). The chain crosses the membrane as a helical span at residues 177–197 (LIVYLISCFGVGITGVVVAFA). A glycan (N-linked (GlcNAc...) asparagine) is linked at Asn199. Transmembrane regions (helical) follow at residues 236-256 (IVGIVIQMFFTLGIIILPGIA) and 264-284 (GIQLAISLPSFLFLLYYWVVP). The Proline-rich sequence signature appears at 284–288 (PESPR). Residue Asn317 is glycosylated (N-linked (GlcNAc...) asparagine). 3 consecutive transmembrane segments (helical) span residues 376 to 396 (MDFFISGLVELPGALLILLTI), 463 to 483 (FGVSLCSGLCDFGGIIAPFLL), and 493 to 513 (LPLIIFGILASVCGGLVMLLP).

This sequence belongs to the major facilitator (TC 2.A.1) superfamily. Organic cation transporter (TC 2.A.1.19) family. As to expression, highly expressed in placenta. Expressed in intestine, hear, kidney and lung. Widely expressed in brain, particularly in hippocampus, cerebellum, cerebral cortex. In the brain, expressed predominantly in regions located at the brain-cerebrospinal fluid border, with expression extending to regions that belong to monoaminergic pathways such as raphe nuclei, striatum and thalamus. In brain, expressed in neurons and glial cells of amygdala. Expression is low in kidney and lung and undetectable in liver. Expressed in Sertoli cells in testis. Expressed in tracheal and bronchial epithelium of the respiratory tract, where it localizes to the apical membrane of ciliated and brush cells, and in basal cells.

It localises to the cell membrane. The protein resides in the apical cell membrane. It is found in the basolateral cell membrane. The protein localises to the mitochondrion membrane. Its subcellular location is the endomembrane system. It localises to the nucleus membrane. The protein resides in the nucleus outer membrane. It catalyses the reaction (R)-noradrenaline(out) = (R)-noradrenaline(in). The enzyme catalyses (R)-adrenaline(out) = (R)-adrenaline(in). It carries out the reaction serotonin(out) = serotonin(in). The catalysed reaction is dopamine(out) = dopamine(in). It catalyses the reaction histamine(out) = histamine(in). The enzyme catalyses tyramine(in) = tyramine(out). It carries out the reaction guanidine(out) = guanidine(in). The catalysed reaction is agmatine(out) = agmatine(in). It catalyses the reaction spermidine(in) = spermidine(out). The enzyme catalyses L-histidyl-L-proline diketopiperazine(in) = L-histidyl-L-proline diketopiperazine(out). It carries out the reaction (R)-salsolinol(in) = (R)-salsolinol(out). Electrogenic voltage-dependent transporter that mediates the transport of a variety of organic cations such as endogenous bioactive amines, cationic drugs and xenobiotics. Cation cellular uptake or release is driven by the electrochemical potential, i.e. membrane potential and concentration gradient. Functions as a Na(+)- and Cl(-)-independent, bidirectional uniporter. Implicated in neuronal monoamine neurotransmitters cellular uptake such as dopamine, adrenaline/epinephrine, noradrenaline/norepinephrine, histamine, serotonin and tyramine, thereby supporting a role in homeostatic regulation of aminergic neurotransmission in the brain. Transports dopaminergic neuromodulators cyclo(his-pro) and salsolinol with low efficiency. May be involved in the uptake and disposition of cationic compounds by renal clearance from the blood flow. May contribute to regulate the transport of cationic compounds in testis across the blood-testis-barrier. Mediates the transport of polyamine spermidine and putrescine. Mediates the bidirectional transport of polyamine agmatine. Also transports guanidine. May also mediate intracellular transport of organic cations, thereby playing a role in amine metabolism and intracellular signaling. The sequence is that of Solute carrier family 22 member 3 from Rattus norvegicus (Rat).